The following is a 349-amino-acid chain: UDP-3-O-acylglucosamine N-acyltransferase (349 aa).

The active-site Proton acceptor is the His-240.

It belongs to the transferase hexapeptide repeat family. LpxD subfamily. Homotrimer.

It catalyses the reaction a UDP-3-O-[(3R)-3-hydroxyacyl]-alpha-D-glucosamine + a (3R)-hydroxyacyl-[ACP] = a UDP-2-N,3-O-bis[(3R)-3-hydroxyacyl]-alpha-D-glucosamine + holo-[ACP] + H(+). The protein operates within bacterial outer membrane biogenesis; LPS lipid A biosynthesis. In terms of biological role, catalyzes the N-acylation of UDP-3-O-acylglucosamine using 3-hydroxyacyl-ACP as the acyl donor. Is involved in the biosynthesis of lipid A, a phosphorylated glycolipid that anchors the lipopolysaccharide to the outer membrane of the cell. The protein is UDP-3-O-acylglucosamine N-acyltransferase of Porphyromonas gingivalis (strain ATCC BAA-308 / W83).